A 450-amino-acid chain; its full sequence is Biotin carboxylase 1 (450 aa).

One can recognise a Biotin carboxylation domain in the interval 1 to 447; the sequence is MIKKLLIANR…NTKFLETYDV (447 aa). ATP is bound by residues Lys116, Lys158, 164-165, 200-203, and His208; these read GG and EKYI. The region spanning 120-318 is the ATP-grasp domain; it reads RETMKQAGVP…LIKEQIKVAS (199 aa). Lys237 is a binding site for hydrogencarbonate. ATP is bound by residues Glu275 and Glu289. Positions 275, 289, and 291 each coordinate Mg(2+). 3 residues coordinate Mn(2+): Glu275, Glu289, and Asn291. Hydrogencarbonate-binding residues include Arg293, Val296, and Arg339. Arg293 is a catalytic residue. Arg339 provides a ligand contact to biotin.

Acetyl-CoA carboxylase is a heterohexamer of biotin carboxyl carrier protein, biotin carboxylase and the two subunits of carboxyl transferase in a 2:2 complex. The cofactor is Mg(2+). It depends on Mn(2+) as a cofactor.

It carries out the reaction N(6)-biotinyl-L-lysyl-[protein] + hydrogencarbonate + ATP = N(6)-carboxybiotinyl-L-lysyl-[protein] + ADP + phosphate + H(+). The protein operates within lipid metabolism; malonyl-CoA biosynthesis; malonyl-CoA from acetyl-CoA: step 1/1. Its function is as follows. This protein is a component of the acetyl coenzyme A carboxylase complex; first, biotin carboxylase catalyzes the carboxylation of the carrier protein and then the transcarboxylase transfers the carboxyl group to form malonyl-CoA. The sequence is that of Biotin carboxylase 1 (accC1) from Bacillus subtilis (strain 168).